The chain runs to 79 residues: Small ribosomal subunit protein bS16c (79 aa).

Belongs to the bacterial ribosomal protein bS16 family.

Its subcellular location is the plastid. It localises to the chloroplast. In Trieres chinensis (Marine centric diatom), this protein is Small ribosomal subunit protein bS16c.